Here is a 223-residue protein sequence, read N- to C-terminus: Probable amino-acid ABC transporter permease protein PatM (223 aa).

An ABC transmembrane type-1 domain is found at 19–210; that stretch reads LGTTMEMATW…GVVVILTRVQ (192 aa). The next 5 membrane-spanning stretches (helical) occupy residues 23–43, 59–78, 90–110, 156–176, and 186–206; these read MEMATWGLVFSLILSVILANI, ISFFRGTPLLVQLFLLYYGL, AFSAAVIGLTLHFAAYMAESI, FIDMIKSTSLAFTLGVAEIMA, and FRFFEAFLAVALIYWGVVVIL.

It belongs to the binding-protein-dependent transport system permease family. HisMQ subfamily.

The protein resides in the cell inner membrane. Probably part of a binding-protein-dependent transport system for an amino acid. Probably responsible for the translocation of the substrate across the membrane. This chain is Probable amino-acid ABC transporter permease protein PatM (patM), found in Vibrio harveyi (Beneckea harveyi).